A 179-amino-acid chain; its full sequence is Diphosphoinositol polyphosphate phosphohydrolase 2 (179 aa).

Substrate-binding positions include arginine 9, 17–19 (KKR), and 38–40 (SSR). The 127-residue stretch at 17–143 (KKRAACLCFR…VHAEYLERLK (127 aa)) folds into the Nudix hydrolase domain. Mg(2+)-binding residues include glycine 49 and glutamate 65. The Nudix box signature appears at 50-71 (GGVEPEEEPGGAAAREVYEEAG). Glutamate 68 functions as the Proton acceptor in the catalytic mechanism. Glutamate 69 provides a ligand contact to Mg(2+). Residues 88–90 (RKH), arginine 114, and lysine 132 each bind substrate.

Belongs to the Nudix hydrolase family. DIPP subfamily. Mg(2+) is required as a cofactor. Requires Mn(2+) as cofactor.

The protein resides in the cytoplasm. It carries out the reaction diphospho-myo-inositol polyphosphate + H2O = myo-inositol polyphosphate + phosphate.. The enzyme catalyses 5-diphospho-1D-myo-inositol 1,2,3,4,6-pentakisphosphate + H2O = 1D-myo-inositol hexakisphosphate + phosphate + H(+). It catalyses the reaction 3,5-bis(diphospho)-1D-myo-inositol 1,2,4,6-tetrakisphosphate + H2O = 3-diphospho-1D-myo-inositol 1,2,4,5,6-pentakisphosphate + phosphate + 2 H(+). The catalysed reaction is 5-diphospho-1D-myo-inositol 1,3,4,6-tetrakisphosphate + H2O = 1D-myo-inositol 1,3,4,5,6-pentakisphosphate + phosphate + H(+). It carries out the reaction P(1),P(6)-bis(5'-adenosyl) hexaphosphate + H2O = 2 ATP + 2 H(+). The enzyme catalyses P(1),P(5)-bis(5'-adenosyl) pentaphosphate + H2O = ADP + ATP + 2 H(+). It catalyses the reaction 5-phospho-alpha-D-ribose 1-diphosphate + H2O = alpha-D-ribose 1,5-bisphosphate + phosphate + H(+). Its function is as follows. Cleaves the beta-phosphate from diphosphoinositol polyphosphates such as PP-InsP5 (diphosphoinositol pentakisphosphate), PP-InsP4 (diphosphoinositol tetrakisphosphate) and [PP]2-InsP4 (bisdiphosphoinositol tetrakisphosphate), suggesting that it may play a role in signal transduction. Diadenosine polyphosphates, particularly Ap6A (P(1),P(6)-bis(5a-adenosyl) hexaphosphate) and Ap5A (P(1),P(5)-bis(5'-adenosyl) pentaphosphate) are downstream effectors of a signaling cascade that regulates cardiac KATP channels, can also be substrates, although with lower preference than the diphosphoinositol polyphosphates. Can also catalyze the hydrolysis of 5-phosphoribose 1-diphosphate, generating the glycolytic activator ribose 1,5-bisphosphate. Does not play a role in U8 snoRNA decapping activity. Binds U8 snoRNA. The polypeptide is Diphosphoinositol polyphosphate phosphohydrolase 2 (Rattus norvegicus (Rat)).